The sequence spans 518 residues: Allene oxide synthase, chloroplastic (518 aa).

The transit peptide at 1–33 (MASISTPFPISLHPKTVRSKPLKFRVLTRPIKA) directs the protein to the chloroplast. Heme b is bound by residues Lys133, His164, and Lys168. The (13S)-hydroperoxy-(9Z,11E)-octadecadienoate site is built by Asn321 and Thr389. The (13S)-hydroperoxy-(9Z,11E,15Z)-octadecatrienoate site is built by Asn321 and Thr389. Heme b-binding residues include Lys469 and Cys471.

It belongs to the cytochrome P450 family. The cofactor is heme b.

The protein resides in the plastid. It localises to the chloroplast. The protein localises to the plastoglobule. It catalyses the reaction (13S)-hydroperoxy-(9Z,11E,15Z)-octadecatrienoate = (9Z,13S,15Z)-12,13-epoxyoctadeca-9,11,15-trienoate + H2O. It carries out the reaction (13S)-hydroperoxy-(9Z,11E)-octadecadienoate = (9Z,13S)-12,13-epoxyoctadeca-9,11-dienoate + H2O. It participates in lipid metabolism; oxylipin biosynthesis. Its function is as follows. Cytochrome P450 enzyme involved in the biosynthesis of oxylipin jasmonates, important phytohormones acting as growth regulators and signaling molecules for plant defense. Functions as an allene oxide synthase that converts hydroperoxy fatty acids to unstable allene epoxides. Catalyzes the dehydration of 13-HPOTE ((13S)-hydroperoxy-(9Z,11E,15Z)-octadecatrienoate), as well as 13-HPODE ((13S)-hydroperoxy-(9Z,11E)-octadecadienoate). The polypeptide is Allene oxide synthase, chloroplastic (CYP74A) (Arabidopsis thaliana (Mouse-ear cress)).